The sequence spans 122 residues: Large ribosomal subunit protein uL14 (122 aa).

It belongs to the universal ribosomal protein uL14 family. As to quaternary structure, part of the 50S ribosomal subunit. Forms a cluster with proteins L3 and L19. In the 70S ribosome, L14 and L19 interact and together make contacts with the 16S rRNA in bridges B5 and B8.

Functionally, binds to 23S rRNA. Forms part of two intersubunit bridges in the 70S ribosome. This is Large ribosomal subunit protein uL14 from Brucella abortus (strain 2308).